The following is a 320-amino-acid chain: MFLAADRPTTDLPADLPAAIAALKQELNAVILAHYYQEAAIQDVADYIGDSLGLSRQAAAADADVIVFAGVHFMAETAKILNPQRQVLLPDLAAGCSLADSCPPEAFAAFKAAHPNHIVISYINCTAEIKALSDIICTSSNAVKIVQQIPVDQPIIFAPDRNLGRYVMQQTGRDLVLWDGSCIVHETFSEQRLLELQARHPDAEIIAHPECETPVLDQARFIGSTTALLNYSLNSPSREFIVVTEPGIIHQMQQAAPEKTFIPAPPQDTTCACNECPFMRLNTLEKLYLCMRDRRPEIQIPEETRLAALRPIERMLAMSA.

Residues His34 and Ser51 each contribute to the iminosuccinate site. Cys96 contributes to the [4Fe-4S] cluster binding site. Iminosuccinate is bound by residues 122-124 and Ser139; that span reads YIN. Cys182 is a [4Fe-4S] cluster binding site. Iminosuccinate-binding positions include 208-210 and Thr225; that span reads HPE. Cys276 contributes to the [4Fe-4S] cluster binding site.

Belongs to the quinolinate synthase family. Type 2 subfamily. The cofactor is [4Fe-4S] cluster.

The protein localises to the cytoplasm. It carries out the reaction iminosuccinate + dihydroxyacetone phosphate = quinolinate + phosphate + 2 H2O + H(+). The protein operates within cofactor biosynthesis; NAD(+) biosynthesis; quinolinate from iminoaspartate: step 1/1. In terms of biological role, catalyzes the condensation of iminoaspartate with dihydroxyacetone phosphate to form quinolinate. In Synechococcus sp. (strain ATCC 27144 / PCC 6301 / SAUG 1402/1) (Anacystis nidulans), this protein is Quinolinate synthase.